The chain runs to 246 residues: Short chain dehydrogenase/reductase dmxR12 (246 aa).

NADP(+)-binding residues include Ile15, Ser34, Lys125, and Lys164. Lys164 (lowers pKa of active site Tyr) is an active-site residue.

Belongs to the short-chain dehydrogenases/reductases (SDR) family.

It participates in secondary metabolite biosynthesis. Functionally, short chain dehydrogenase/reductase; part of the gene cluster that mediates the biosynthesis of the dimeric xanthones cryptosporioptides. The pathway begins with the synthesis of atrochrysone thioester by the polyketide synthase dmx-nrPKS. The atrochrysone carboxyl ACP thioesterase dmxR1 then breaks the thioester bond and releases the atrochrysone carboxylic acid from dmx-nrPKS. Atrochrysone carboxylic acid is decarboxylated by the decarboxylase dmxR15, and oxidized by the anthrone oxygenase dmxR16 to yield emodin. Emodin is then reduced to emodin hydroquinone by the oxidoreductase dmxR7. A-ring reduction by the short chain dehydrogenase dmxR18, dehydration by the scytalone dehydratase-like protein dmxR17 and probable spontaneous re-oxidation, results in overall deoxygenation to chrysophanol. Baeyer-Villiger oxidation by the Baeyer-Villiger monooxygenase (BVMO) dmxR6 then yields monodictylactone in equilibrium with monodictyphenone. In the case of the cryptosporioptides biosynthesis, monodictylactone is reduced at C-12 to an alcohol (by the short chain dehydrogenases dmxR12 or dmxR8) and hydroxylated at C-5 by dmxR9, yielding the electron-rich aromatic which could eliminate H(2)O to form the ortho-quinonemethide, followed by tautomerisation to paraquinone and complete the formal reduction to produce the 10-methylgroup. Conjugate addition of C-4a-OH to the resulting paraquinone by the monooxygenase dmxR10 then gives cyclohexadienone, which is then reduced at C-5 by the short chain dehydrogenase dmxR3 to give the dihydroxanthone. The 6,7-epoxide in the cryptosporioptides could be introduced by the cytochrome P450 monooxygenase dmxL3. The highly reducing PKS dmxL2 manufactures butyrate, which is further carboxylated by dmxL1 to form ethylmalonate. It is not yet clear whether the carboxylation occurs while the butyrate is attached to the ACP of dmxL2, but this unusual fungal metabolite could then be esterified to O-5 by the O-acetyltransferase dmxR13. Finally, dimerization performed by dmxR5 gives the observed dimers cryptosporioptides A, B and C as the final products of the pathway. In Cryptosporiopsis sp. (strain 8999), this protein is Short chain dehydrogenase/reductase dmxR12.